We begin with the raw amino-acid sequence, 205 residues long: Snake venom metalloproteinase BmooMPalpha-I (205 aa).

The 197-residue stretch at 8-204 (RYIELVVVAD…HNPQCILNEP (197 aa)) folds into the Peptidase M12B domain. Residues glutamate 11 and aspartate 95 each contribute to the Ca(2+) site. Cystine bridges form between cysteine 119–cysteine 199, cysteine 159–cysteine 183, and cysteine 161–cysteine 166. Histidine 144 is a binding site for Zn(2+). Glutamate 145 is a catalytic residue. Zn(2+) is bound by residues histidine 148 and histidine 154. Residues cysteine 199 and asparagine 202 each coordinate Ca(2+).

This sequence belongs to the venom metalloproteinase (M12B) family. P-I subfamily. In terms of assembly, monomer. Zn(2+) serves as cofactor. As to expression, expressed by the venom gland.

It is found in the secreted. With respect to regulation, inhibited by EDTA. Not inhibited by the serine proteinase inhibitors aprotinin and benzamidine. Functionally, snake venom zinc metalloproteinase that cleaves the alpha chain of fibrinogen (FGA) first followed by the beta chain (FGB) and shows no effect on the gamma chain. Cleaves only the beta chain of fibrin, leaving the gamma-dimer untouched. Shows proteolytic activity towards azocasein. Causes defibrinogenation when intraperitoneally administered on mice. This is Snake venom metalloproteinase BmooMPalpha-I from Bothrops moojeni (Lance-headed viper).